A 361-amino-acid chain; its full sequence is tRNA/tmRNA (uracil-C(5))-methyltransferase (361 aa).

Positions 185, 213, 218, 234, and 294 each coordinate S-adenosyl-L-methionine. Cys319 serves as the catalytic Nucleophile. Catalysis depends on Glu353, which acts as the Proton acceptor.

Belongs to the class I-like SAM-binding methyltransferase superfamily. RNA M5U methyltransferase family. TrmA subfamily.

It catalyses the reaction uridine(54) in tRNA + S-adenosyl-L-methionine = 5-methyluridine(54) in tRNA + S-adenosyl-L-homocysteine + H(+). The catalysed reaction is uridine(341) in tmRNA + S-adenosyl-L-methionine = 5-methyluridine(341) in tmRNA + S-adenosyl-L-homocysteine + H(+). Dual-specificity methyltransferase that catalyzes the formation of 5-methyluridine at position 54 (m5U54) in all tRNAs, and that of position 341 (m5U341) in tmRNA (transfer-mRNA). This chain is tRNA/tmRNA (uracil-C(5))-methyltransferase, found in Azotobacter vinelandii (strain DJ / ATCC BAA-1303).